A 125-amino-acid polypeptide reads, in one-letter code: Large ribosomal subunit protein bL12 (125 aa).

This sequence belongs to the bacterial ribosomal protein bL12 family. Homodimer. Part of the ribosomal stalk of the 50S ribosomal subunit. Forms a multimeric L10(L12)X complex, where L10 forms an elongated spine to which 2 to 4 L12 dimers bind in a sequential fashion. Binds GTP-bound translation factors.

Functionally, forms part of the ribosomal stalk which helps the ribosome interact with GTP-bound translation factors. Is thus essential for accurate translation. The chain is Large ribosomal subunit protein bL12 from Campylobacter jejuni subsp. jejuni serotype O:6 (strain 81116 / NCTC 11828).